A 162-amino-acid polypeptide reads, in one-letter code: Cytochrome c-type biogenesis protein CcmE (162 aa).

Residues Met-1–Arg-8 are Cytoplasmic-facing. A helical; Signal-anchor for type II membrane protein membrane pass occupies residues Leu-9–Ala-29. Residues Leu-30 to Lys-162 are Periplasmic-facing. Heme contacts are provided by His-131 and Tyr-135. Positions Glu-139 to Lys-162 are disordered. Residues Tyr-153–Lys-162 show a composition bias toward polar residues.

This sequence belongs to the CcmE/CycJ family.

It localises to the cell inner membrane. Functionally, heme chaperone required for the biogenesis of c-type cytochromes. Transiently binds heme delivered by CcmC and transfers the heme to apo-cytochromes in a process facilitated by CcmF and CcmH. The chain is Cytochrome c-type biogenesis protein CcmE from Shewanella putrefaciens (strain CN-32 / ATCC BAA-453).